A 130-amino-acid chain; its full sequence is Large ribosomal subunit protein bL20c (130 aa).

Belongs to the bacterial ribosomal protein bL20 family.

It localises to the plastid. It is found in the chloroplast. Its function is as follows. Binds directly to 23S ribosomal RNA and is necessary for the in vitro assembly process of the 50S ribosomal subunit. It is not involved in the protein synthesizing functions of that subunit. This Glycine max (Soybean) protein is Large ribosomal subunit protein bL20c (rpl20).